The sequence spans 393 residues: S-adenosylmethionine synthase (393 aa).

Histidine 16 serves as a coordination point for ATP. Aspartate 18 contacts Mg(2+). Glutamate 44 is a K(+) binding site. The L-methionine site is built by glutamate 57 and glutamine 100. A flexible loop region spans residues 100-110 (QSNDIAQGVDH). ATP-binding positions include 167–169 (DAK), 238–239 (RF), aspartate 247, 253–254 (RK), alanine 270, and lysine 274. An L-methionine-binding site is contributed by aspartate 247. Residue lysine 278 coordinates L-methionine.

Belongs to the AdoMet synthase family. In terms of assembly, homotetramer; dimer of dimers. Mg(2+) serves as cofactor. It depends on K(+) as a cofactor.

Its subcellular location is the cytoplasm. The enzyme catalyses L-methionine + ATP + H2O = S-adenosyl-L-methionine + phosphate + diphosphate. Its pathway is amino-acid biosynthesis; S-adenosyl-L-methionine biosynthesis; S-adenosyl-L-methionine from L-methionine: step 1/1. Functionally, catalyzes the formation of S-adenosylmethionine (AdoMet) from methionine and ATP. The overall synthetic reaction is composed of two sequential steps, AdoMet formation and the subsequent tripolyphosphate hydrolysis which occurs prior to release of AdoMet from the enzyme. This chain is S-adenosylmethionine synthase, found in Variovorax paradoxus (strain S110).